A 1044-amino-acid chain; its full sequence is Carbamoyl phosphate synthase large chain (1044 aa).

The segment at 1 to 398 (MPKREDISKI…ALMKAIASLD (398 aa)) is carboxyphosphate synthetic domain. 12 residues coordinate ATP: Arg-129, Arg-169, Gly-175, Gly-176, Arg-208, Leu-210, Glu-215, Gly-241, Val-242, His-243, Gln-284, and Glu-296. An ATP-grasp 1 domain is found at 133–325 (HDFLISIGER…IARIAAKIAV (193 aa)). The Mg(2+) site is built by Gln-284, Glu-296, and Asn-298. Residues Gln-284, Glu-296, and Asn-298 each coordinate Mn(2+). The oligomerization domain stretch occupies residues 399 to 539 (IDLSYRLRLY…YSTYEDEDEL (141 aa)). Residues 540–916 (PGISGFVAII…AIRKSILRDI (377 aa)) are carbamoyl phosphate synthetic domain. Positions 665-854 (SKRLEAMGID…WVELAVSAIM (190 aa)) constitute an ATP-grasp 2 domain. ATP contacts are provided by Arg-701, Lys-738, Leu-740, Glu-745, Gly-770, Val-771, His-772, Ser-773, Gln-813, and Glu-825. Mg(2+)-binding residues include Gln-813, Glu-825, and Asn-827. 3 residues coordinate Mn(2+): Gln-813, Glu-825, and Asn-827. The MGS-like domain occupies 911–1044 (SILRDIKSVF…IDYREISSYH (134 aa)). Residues 916-1044 (IKSVFISVRD…IDYREISSYH (129 aa)) form an allosteric domain region.

It belongs to the CarB family. Composed of two chains; the small (or glutamine) chain promotes the hydrolysis of glutamine to ammonia, which is used by the large (or ammonia) chain to synthesize carbamoyl phosphate. Tetramer of heterodimers (alpha,beta)4. Requires Mg(2+) as cofactor. Mn(2+) serves as cofactor.

The catalysed reaction is hydrogencarbonate + L-glutamine + 2 ATP + H2O = carbamoyl phosphate + L-glutamate + 2 ADP + phosphate + 2 H(+). The enzyme catalyses hydrogencarbonate + NH4(+) + 2 ATP = carbamoyl phosphate + 2 ADP + phosphate + 2 H(+). It functions in the pathway amino-acid biosynthesis; L-arginine biosynthesis; carbamoyl phosphate from bicarbonate: step 1/1. The protein operates within pyrimidine metabolism; UMP biosynthesis via de novo pathway; (S)-dihydroorotate from bicarbonate: step 1/3. Functionally, large subunit of the glutamine-dependent carbamoyl phosphate synthetase (CPSase). CPSase catalyzes the formation of carbamoyl phosphate from the ammonia moiety of glutamine, carbonate, and phosphate donated by ATP, constituting the first step of 2 biosynthetic pathways, one leading to arginine and/or urea and the other to pyrimidine nucleotides. The large subunit (synthetase) binds the substrates ammonia (free or transferred from glutamine from the small subunit), hydrogencarbonate and ATP and carries out an ATP-coupled ligase reaction, activating hydrogencarbonate by forming carboxy phosphate which reacts with ammonia to form carbamoyl phosphate. The chain is Carbamoyl phosphate synthase large chain from Thermoplasma volcanium (strain ATCC 51530 / DSM 4299 / JCM 9571 / NBRC 15438 / GSS1).